Here is a 302-residue protein sequence, read N- to C-terminus: Cuticle collagen 40 (302 aa).

Disordered stretches follow at residues R79–G103 and A119–Y302. Over residues Y91–G103 the composition is skewed to gly residues. 5 triple-helical region regions span residues G114–D143, G162–T185, G189–V221, G226–S252, and G255–C290. Over residues P137–D154 the composition is skewed to low complexity. The segment covering A194–A203 has biased composition (pro residues). Low complexity-rich tracts occupy residues N205–A234 and N245–A281. The segment covering C293 to Y302 has biased composition (pro residues).

It belongs to the cuticular collagen family. In terms of assembly, collagen polypeptide chains are complexed within the cuticle by disulfide bonds and other types of covalent cross-links.

Nematode cuticles are composed largely of collagen-like proteins. The cuticle functions both as an exoskeleton and as a barrier to protect the worm from its environment. The polypeptide is Cuticle collagen 40 (col-40) (Caenorhabditis elegans).